Here is a 1076-residue protein sequence, read N- to C-terminus: Ribosome quality control complex subunit NEMF (1076 aa).

A Phosphothreonine modification is found at Thr7. Positions 296 to 359 (VDEFYSKIEG…LIEMNLQIVD (64 aa)) form a coiled coil. Ser417 carries the post-translational modification Phosphoserine. A disordered region spans residues 420-453 (EDDDVDGDVNVEKNETEPPKGKKKKQKNKQLQKP). A compositionally biased stretch (basic and acidic residues) spans 429–439 (NVEKNETEPPK). Over residues 440-449 (GKKKKQKNKQ) the composition is skewed to basic residues. A coiled-coil region spans residues 483–514 (AAKKTQKTVEAAEKAFKSAEKKTKQTLKEVQT). Composition is skewed to acidic residues over residues 691–710 (ISEEMEQLDGGDTSSDEDKE) and 742–754 (LIQEESSEDEGEY). Disordered stretches follow at residues 691–715 (ISEEMEQLDGGDTSSDEDKEEHETP) and 742–972 (LIQE…DLDQ). A phosphoserine mark is found at Ser747, Ser748, and Ser763. Residues 755 to 768 (EEVRKDQDSVGEMK) are compositionally biased toward basic and acidic residues. The span at 777–795 (YPDTTIDLSHLQPQRSIQK) shows a compositional bias: polar residues. A Phosphoserine modification is found at Ser831. A compositionally biased stretch (basic and acidic residues) spans 839 to 854 (LEGKDKEKESTVHIET). A coiled-coil region spans residues 869-894 (KRGQKSKMKKMKEKYKDQDEEDRELI). Basic residues predominate over residues 870–881 (RGQKSKMKKMKE). The segment covering 937–965 (DNIKKETPFLEVITHELQDFAVDDPHDDK) has biased composition (basic and acidic residues).

Belongs to the NEMF family. In terms of assembly, component of the ribosome quality control complex (RQC), composed of the E3 ubiquitin ligase LTN1, TCF25 and NEMF associated with the 60S ribosomal subunit. The complex probably also contains VCP/p97 and its ubiquitin-binding cofactors. Interacts (via its N-terminus) with XPO1. In terms of tissue distribution, expressed in brain, heart, liver, lung, spleen, and skeletal muscle. Also expressed at lower levels in stomach and testis.

Its subcellular location is the cytoplasm. The protein localises to the cytosol. It localises to the nucleus. Functionally, key component of the ribosome quality control complex (RQC), a ribosome-associated complex that mediates the extraction of incompletely synthesized nascent chains from stalled ribosomes as well as their ubiquitin-mediated proteasomal degradation. Thereby, frees 60S subunit ribosomes from the stalled translation complex and prevents the accumulation of nascent polypeptide chains that are potentially toxic for the cell. Within the RQC complex, NEMF specifically binds stalled 60S ribosomal subunits by recognizing an exposed, nascent chain-conjugated tRNA moiety and promotes the recruitment of LTN1 to stalled 60S subunits. Following binding to stalled 60S ribosomal subunits, NEMF mediates CAT tailing by recruiting alanine-charged tRNA to the A-site and directing the elongation of stalled nascent chains independently of mRNA or 40S subunits, leading to non-templated C-terminal alanine extensions (CAT tails). Mainly recruits alanine-charged tRNAs, but can also other amino acid-charged tRNAs. CAT tailing is required to promote ubiquitination of stalled nascent chains by different E3 ubiquitin-protein ligases. In the canonical RQC pathway (RQC-L), CAT tailing facilitates LTN1-dependent ubiquitination by exposing lysine residues that would otherwise remain buried in the ribosomal exit tunnel. In the alternative RQC pathway (RQC-C) CAT tailing creates an C-degron mainly composed of alanine that is recognized by the CRL2(KLHDC10) and RCHY1/PIRH2 E3 ligases, leading to ubiquitination and degradation of stalled nascent chains. NEMF may also indirectly play a role in nuclear export. This is Ribosome quality control complex subunit NEMF from Homo sapiens (Human).